The following is a 210-amino-acid chain: Mitochondrial import receptor subunit TOM20-2 (210 aa).

Met1 is modified (N-acetylmethionine). Residues 1-178 lie on the Cytoplasmic side of the membrane; the sequence is MEFSTADFER…SSKKKKRNTE (178 aa). TPR repeat units lie at residues 42–75 and 83–120; these read LLEL…NPGK and ANAY…DPGN. The span at 151-161 shows a compositional bias: gly residues; the sequence is GGGGGGGGGGM. A disordered region spans residues 151 to 172; the sequence is GGGGGGGGGGMASSNVSQSSKK. Residues 179–199 form a helical membrane-spanning segment; the sequence is FTYDVCGWIILACGIVAWVGM. Residues 200–210 lie on the Mitochondrial intermembrane side of the membrane; that stretch reads AKSLGPPPPAR.

The protein belongs to the Tom20 family. In terms of assembly, forms part of the preprotein translocase complex of the outer mitochondrial membrane (TOM complex) which consists of at least 6 different proteins (TOM5, TOM6, TOM7, TOM20, TOM22/TOM9 and TOM40). Component of a mitochondrial large protein complex that contains, at least, MIC60, DGS1, TOM40, TOM20 proteins, and petC/RISP. The N-terminus is blocked. In terms of tissue distribution, expressed in roots, flowers, young cotyledons and leaves.

It localises to the mitochondrion outer membrane. In terms of biological role, central component of the receptor complex responsible for the recognition and translocation of cytosolically synthesized mitochondrial preproteins. Together with TOM22 functions as the transit peptide receptor at the surface of the mitochondrion outer membrane and facilitates the movement of preproteins into the translocation pore. In Arabidopsis thaliana (Mouse-ear cress), this protein is Mitochondrial import receptor subunit TOM20-2.